Consider the following 314-residue polypeptide: Melanoma-associated antigen 3 (314 aa).

Positions 1 to 20 (MPLEQRSQHCKPEEGLEARG) are enriched in basic and acidic residues. Residues 1 to 99 (MPLEQRSQHC…QEEEGPSTFP (99 aa)) are disordered. Residues 21–44 (EALGLVGAQAPATEEQEAASSSST) show a composition bias toward low complexity. Polar residues predominate over residues 65–87 (PQGASSLPTTMNYPLWSQSYEDS). One can recognise an MAGE domain in the interval 109–308 (LSRKVAELVH…ISYPPLHEWV (200 aa)).

In terms of assembly, interacts with TRIM28. Ubiquitinated by the DCX(DCAF12) complex specifically recognizes the diglutamate (Glu-Glu) at the C-terminus, leading to its degradation. As to expression, expressed in many tumors of several types, such as melanoma, head and neck squamous cell carcinoma, lung carcinoma and breast carcinoma, but not in normal tissues except for testes and placenta. Never expressed in kidney tumors, Leukemias and lymphomas.

Functionally, activator of ubiquitin ligase activity of RING-type zinc finger-containing E3 ubiquitin-protein ligases that acts as a repressor of autophagy. May enhance ubiquitin ligase activity of TRIM28 and stimulate p53/TP53 ubiquitination by TRIM28. Proposed to act through recruitment and/or stabilization of the Ubl-conjugating enzyme (E2) at the E3:substrate complex. May play a role in embryonal development and tumor transformation or aspects of tumor progression. In vitro promotes cell viability in melanoma cell lines. Antigen recognized on a melanoma by autologous cytolytic T-lymphocytes. The polypeptide is Melanoma-associated antigen 3 (Homo sapiens (Human)).